We begin with the raw amino-acid sequence, 151 residues long: Ribonuclease H (151 aa).

The region spanning 1–146 (MSDLFAYTDG…ADELARAGMA (146 aa)) is the RNase H type-1 domain. 4 residues coordinate Mg(2+): D9, E52, D74, and D138.

The protein belongs to the RNase H family. In terms of assembly, monomer. Mg(2+) is required as a cofactor.

It is found in the cytoplasm. It carries out the reaction Endonucleolytic cleavage to 5'-phosphomonoester.. In terms of biological role, endonuclease that specifically degrades the RNA of RNA-DNA hybrids. This Cereibacter sphaeroides (strain ATCC 17025 / ATH 2.4.3) (Rhodobacter sphaeroides) protein is Ribonuclease H.